Consider the following 514-residue polypeptide: Carboxysome shell carbonic anhydrase (514 aa).

The disordered stretch occupies residues 1-27 (MAYRNRNLASQTQRPLAPTAPRRRPVV). Residue Cys-175 participates in Zn(2+) binding. Asp-177 functions as the Proton acceptor in the catalytic mechanism. His-243 and Cys-254 together coordinate Zn(2+).

Belongs to the beta-class carbonic anhydrase family. CsoSCA subfamily. Homodimer. The cofactor is Zn(2+).

The protein resides in the carboxysome. It carries out the reaction hydrogencarbonate + H(+) = CO2 + H2O. In terms of biological role, reversible hydration of carbon dioxide. Essential for photosynthetic carbon dioxide fixation, supplies CO(2) to RuBisCO (ribulose bisphosphate carboxylase, cbbL-cbbS) in the carboxysome. The protein is Carboxysome shell carbonic anhydrase of Prochlorococcus marinus (strain MIT 9313).